The chain runs to 434 residues: Glutamyl-tRNA reductase (434 aa).

Residues 49–52, S109, 114–116, and Q120 contribute to the substrate site; these read TCNR and EPQ. Catalysis depends on C50, which acts as the Nucleophile. 189–194 provides a ligand contact to NADP(+); it reads GAGEMC.

Belongs to the glutamyl-tRNA reductase family. Homodimer.

It carries out the reaction (S)-4-amino-5-oxopentanoate + tRNA(Glu) + NADP(+) = L-glutamyl-tRNA(Glu) + NADPH + H(+). Its pathway is porphyrin-containing compound metabolism; protoporphyrin-IX biosynthesis; 5-aminolevulinate from L-glutamyl-tRNA(Glu): step 1/2. Its function is as follows. Catalyzes the NADPH-dependent reduction of glutamyl-tRNA(Glu) to glutamate 1-semialdehyde (GSA). This chain is Glutamyl-tRNA reductase, found in Citrifermentans bemidjiense (strain ATCC BAA-1014 / DSM 16622 / JCM 12645 / Bem) (Geobacter bemidjiensis).